The chain runs to 238 residues: Cysteine-rich venom protein pseudechetoxin-like (238 aa).

The signal sequence occupies residues 1–19 (MIAFIVLLSLAAVLQQSSG). A propeptide spanning residues 20–28 (TVDFASESS) is cleaved from the precursor. Residues 38–164 (VDKHNALRRS…STKYLYVCQY (127 aa)) enclose the SCP domain. Intrachain disulfides connect C75/C153, C92/C165, C148/C162, C184/C191, C187/C196, C200/C233, C209/C227, and C218/C231. A ShKT domain is found at 200–233 (CKHEDDFSNCKALAKNSKCQTAWIKSKCPATCFC).

It belongs to the CRISP family. Expressed by the venom gland.

It is found in the secreted. In terms of biological role, blocks olfactory (CNGA2) and retinal (CNGA1) CNG channel currents. Does not affect neither depolarization- nor caffeine-induced contraction of smooth muscle. In Hoplocephalus stephensii (Stephens's banded snake), this protein is Cysteine-rich venom protein pseudechetoxin-like.